The sequence spans 985 residues: Probable beta-galactosidase C (985 aa).

The N-terminal stretch at 1–23 is a signal peptide; it reads MRILSLLFLLLLGFLAGNRVVSA. Residues Tyr-82, Asn-127, Ala-128, Glu-129, and Asn-187 each coordinate substrate. Glu-188 functions as the Proton donor in the catalytic mechanism. Tyr-251 is a substrate binding site. Cysteines 257 and 304 form a disulfide. Residue Asn-276 is glycosylated (N-linked (GlcNAc...) asparagine). Catalysis depends on Glu-287, which acts as the Nucleophile. Residue Tyr-353 coordinates substrate. 8 N-linked (GlcNAc...) asparagine glycosylation sites follow: Asn-391, Asn-434, Asn-517, Asn-602, Asn-677, Asn-715, Asn-720, and Asn-759.

Belongs to the glycosyl hydrolase 35 family.

It localises to the secreted. The catalysed reaction is Hydrolysis of terminal non-reducing beta-D-galactose residues in beta-D-galactosides.. Functionally, cleaves beta-linked terminal galactosyl residues from gangliosides, glycoproteins, and glycosaminoglycans. The protein is Probable beta-galactosidase C (lacC) of Aspergillus clavatus (strain ATCC 1007 / CBS 513.65 / DSM 816 / NCTC 3887 / NRRL 1 / QM 1276 / 107).